Consider the following 255-residue polypeptide: Zinc-finger homeodomain protein 6 (255 aa).

Residues 1–35 (MEFRGHDEPVDEMGVAYGRTPPSSSSSPAASASAG) are disordered. Over residues 21–35 (PPSSSSSPAASASAG) the composition is skewed to low complexity. The ZF-HD dimerization-type; degenerate zinc finger occupies 45–93 (YHECLRNHAAAMGGHVVDGCREFMPMPGDAADALKCAACGCHRSFHRKD). Pro residues predominate over residues 106-126 (PSPPTPRVPLLMPPPQPQPHP). 2 disordered regions span residues 106 to 181 (PSPP…KFTP) and 226 to 255 (NNKSSIGSSSGGGSRRQPQEQQSQQQQQQQ). Residues 139–153 (YHHTPSGSGGTTTES) show a composition bias toward low complexity. Positions 172 to 235 (RKRFRTKFTP…NNKSSIGSSS (64 aa)) form a DNA-binding region, homeobox. A compositionally biased stretch (low complexity) spans 240 to 255 (RRQPQEQQSQQQQQQQ).

Homo- and heterodimer with other ZFHD proteins.

It localises to the nucleus. Its function is as follows. Putative transcription factor. The polypeptide is Zinc-finger homeodomain protein 6 (ZHD6) (Oryza sativa subsp. japonica (Rice)).